Reading from the N-terminus, the 310-residue chain is Aspartate carbamoyltransferase catalytic subunit 3 (310 aa).

Residues Arg-55 and Thr-56 each coordinate carbamoyl phosphate. Lys-85 contacts L-aspartate. Residues Arg-106, His-134, and Gln-137 each coordinate carbamoyl phosphate. Positions 167 and 228 each coordinate L-aspartate. Carbamoyl phosphate is bound by residues Leu-266 and Pro-267.

It belongs to the aspartate/ornithine carbamoyltransferase superfamily. ATCase family. In terms of assembly, heterododecamer (2C3:3R2) of six catalytic PyrB chains organized as two trimers (C3), and six regulatory PyrI chains organized as three dimers (R2).

It catalyses the reaction carbamoyl phosphate + L-aspartate = N-carbamoyl-L-aspartate + phosphate + H(+). It participates in pyrimidine metabolism; UMP biosynthesis via de novo pathway; (S)-dihydroorotate from bicarbonate: step 2/3. Its function is as follows. Catalyzes the condensation of carbamoyl phosphate and aspartate to form carbamoyl aspartate and inorganic phosphate, the committed step in the de novo pyrimidine nucleotide biosynthesis pathway. This Shewanella halifaxensis (strain HAW-EB4) protein is Aspartate carbamoyltransferase catalytic subunit 3.